Reading from the N-terminus, the 365-residue chain is Phospho-N-acetylmuramoyl-pentapeptide-transferase (365 aa).

Transmembrane regions (helical) follow at residues 19–39 (LLIL…WLLT), 47–67 (AVIL…FGVI), 91–111 (AGTP…VALI), 115–135 (FDPQ…IGWV), 155–175 (LLLQ…TGSP), 184–204 (GNLI…VLVA), 224–244 (AIAF…LMIF), 281–301 (AVGL…IFFV), and 344–364 (TQIV…GFIS).

The protein belongs to the glycosyltransferase 4 family. MraY subfamily. Mg(2+) serves as cofactor.

It is found in the cell inner membrane. It carries out the reaction UDP-N-acetyl-alpha-D-muramoyl-L-alanyl-gamma-D-glutamyl-meso-2,6-diaminopimeloyl-D-alanyl-D-alanine + di-trans,octa-cis-undecaprenyl phosphate = di-trans,octa-cis-undecaprenyl diphospho-N-acetyl-alpha-D-muramoyl-L-alanyl-D-glutamyl-meso-2,6-diaminopimeloyl-D-alanyl-D-alanine + UMP. It participates in cell wall biogenesis; peptidoglycan biosynthesis. Its function is as follows. Catalyzes the initial step of the lipid cycle reactions in the biosynthesis of the cell wall peptidoglycan: transfers peptidoglycan precursor phospho-MurNAc-pentapeptide from UDP-MurNAc-pentapeptide onto the lipid carrier undecaprenyl phosphate, yielding undecaprenyl-pyrophosphoryl-MurNAc-pentapeptide, known as lipid I. The sequence is that of Phospho-N-acetylmuramoyl-pentapeptide-transferase from Gloeothece citriformis (strain PCC 7424) (Cyanothece sp. (strain PCC 7424)).